Consider the following 1023-residue polypeptide: Sodium/potassium-transporting ATPase subunit alpha-1 (1023 aa).

The propeptide occupies 1–5; it reads MGYGA. Residues 1–11 show a composition bias toward basic and acidic residues; that stretch reads MGYGAGRDKYE. Residues 1 to 34 are disordered; sequence MGYGAGRDKYEPAATSEHGGKKGKGKGKDRDMEE. Topologically, residues 6–87 are cytoplasmic; sequence GRDKYEPAAT…NALTPPPTTP (82 aa). The residue at position 15 (Thr-15) is a Phosphothreonine; by PKC. Ser-16 carries the post-translational modification Phosphoserine; by PKC. The tract at residues 82–84 is interaction with phosphoinositide-3 kinase; sequence PPP. Residues 88–108 traverse the membrane as a helical segment; it reads EWVKFCRQLFGGFSMLLWIGA. Over 109–131 the chain is Extracellular; it reads ILCFLAYGIRKASDLEPDNDNLY. A helical membrane pass occupies residues 132 to 152; that stretch reads LGVVLSAVVIITGCFSYYQEA. Residues 153–288 lie on the Cytoplasmic side of the membrane; that stretch reads KSSRIMESFK…GGQTPIAVEI (136 aa). The disordered stretch occupies residues 215-235; sequence NSSLTGESEPQTRSPDFTNEN. Residues 289–308 traverse the membrane as a helical segment; sequence GHFIHIITGVAVFLGVSFFI. The Extracellular segment spans residues 309 to 320; that stretch reads LSLILHYTWLEA. A helical membrane pass occupies residues 321–338; the sequence is VIFLIGIIVANVPEGLLA. Topologically, residues 339 to 772 are cytoplasmic; sequence TVTVCLTLTA…EEGRLIFDNL (434 aa). Residue Asp-376 is the 4-aspartylphosphate intermediate of the active site. Lys-487 serves as a coordination point for ATP. Residues Asp-717 and Asp-721 each coordinate Mg(2+). The chain crosses the membrane as a helical span at residues 773–792; the sequence is KKSIAYTLTSNIPEITPFLI. At 793–802 the chain is on the extracellular side; sequence FIIADIPLPL. The chain crosses the membrane as a helical span at residues 803-823; sequence GTVTILCIDLGTDMVPAISLA. Residues 824 to 843 are Cytoplasmic-facing; sequence YEQAESDIMKRQPRNPKKDK. The chain crosses the membrane as a helical span at residues 844-866; the sequence is LVNERLISMAYGQIGMIQALGGF. The Extracellular portion of the chain corresponds to 867–918; the sequence is FAYFVILAENGFLPSTLLGIRVAWEDRYVNDVEDSYGQQWTYEQRKIVEFTC. The helical transmembrane segment at 919–938 threads the bilayer; sequence HTAFFVSIVVVQWADLIICK. At 939–951 the chain is on the cytoplasmic side; the sequence is TRRNSVFQQGMKN. Position 943 is a phosphoserine; by PKA (Ser-943). A helical transmembrane segment spans residues 952 to 970; that stretch reads KILIFGLFEETALAAFLSY. Topologically, residues 971–985 are extracellular; sequence CPGMDVALRMYPLKP. The chain crosses the membrane as a helical span at residues 986-1006; that stretch reads TWWFCAFPYSLLIFIYDEVRK. Residues 1007-1023 are Cytoplasmic-facing; that stretch reads LILRRSPGGWVEKETYY.

The protein belongs to the cation transport ATPase (P-type) (TC 3.A.3) family. Type IIC subfamily. The sodium/potassium-transporting ATPase is composed of a catalytic alpha subunit, an auxiliary non-catalytic beta subunit and an additional regulatory subunit. Mainly expressed in kidney. Found in bladder, colon, eye, and testis. Found in low levels in brain, heart, spleen and liver.

Its subcellular location is the cell membrane. The protein resides in the sarcolemma. It carries out the reaction K(+)(out) + Na(+)(in) + ATP + H2O = K(+)(in) + Na(+)(out) + ADP + phosphate + H(+). This alpha subunit is resistant to ouabain. In terms of biological role, this is the catalytic component of the active enzyme, which catalyzes the hydrolysis of ATP coupled with the exchange of sodium and potassium ions across the plasma membrane. This action creates the electrochemical gradient of sodium and potassium ions, providing the energy for active transport of various nutrients. In Rhinella marina (Cane toad), this protein is Sodium/potassium-transporting ATPase subunit alpha-1 (ATP1A1).